Here is an 869-residue protein sequence, read N- to C-terminus: Bifunctional uridylyltransferase/uridylyl-removing enzyme (869 aa).

The segment at 1-332 (MTDAPAERPD…QFDGEATPES (332 aa)) is uridylyltransferase. Residues 333-691 (LGGGFSLRRG…RRAVPDNDAL (359 aa)) are uridylyl-removing. Positions 450–572 (VDQHTLMVLR…VGTRERLDYL (123 aa)) constitute an HD domain. ACT domains are found at residues 692 to 774 (EVFV…RAVP) and 798 to 869 (RISL…LDPV).

It belongs to the GlnD family. Mg(2+) serves as cofactor.

The catalysed reaction is [protein-PII]-L-tyrosine + UTP = [protein-PII]-uridylyl-L-tyrosine + diphosphate. It carries out the reaction [protein-PII]-uridylyl-L-tyrosine + H2O = [protein-PII]-L-tyrosine + UMP + H(+). Uridylyltransferase (UTase) activity is inhibited by glutamine, while glutamine activates uridylyl-removing (UR) activity. Functionally, modifies, by uridylylation and deuridylylation, the PII regulatory proteins (GlnB and homologs), in response to the nitrogen status of the cell that GlnD senses through the glutamine level. Under low glutamine levels, catalyzes the conversion of the PII proteins and UTP to PII-UMP and PPi, while under higher glutamine levels, GlnD hydrolyzes PII-UMP to PII and UMP (deuridylylation). Thus, controls uridylylation state and activity of the PII proteins, and plays an important role in the regulation of nitrogen assimilation and metabolism. This chain is Bifunctional uridylyltransferase/uridylyl-removing enzyme, found in Xanthomonas oryzae pv. oryzae (strain MAFF 311018).